Reading from the N-terminus, the 77-residue chain is Membrane-associated ATPase epsilon chain (77 aa).

This sequence to E.hirae NtpH. As to quaternary structure, sul-ATPase is composed of six (or maybe five) subunits: alpha, beta, delta, gamma, C (proteolipid), and possibly epsilon.

The catalysed reaction is ATP + H2O + 4 H(+)(in) = ADP + phosphate + 5 H(+)(out). The polypeptide is Membrane-associated ATPase epsilon chain (atpE) (Sulfolobus acidocaldarius (strain ATCC 33909 / DSM 639 / JCM 8929 / NBRC 15157 / NCIMB 11770)).